The chain runs to 445 residues: FAS-associated factor 2-A (445 aa).

The region spanning 12–53 (EQTEKLLQFQDLTGIESMDQCRQTLQQHNWNIEAAVQDRLNE) is the UBA domain. Residues 275–353 (SERLEREERN…ERKSECLPAE (79 aa)) adopt a coiled-coil conformation. The tract at residues 302-354 (RADQEKERKKKEKQEQKRREEEEAQRKQMLEERKKRNLEEEKERKSECLPAEP) is disordered. Residues 303–348 (ADQEKERKKKEKQEQKRREEEEAQRKQMLEERKKRNLEEEKERKSE) are compositionally biased toward basic and acidic residues. Residues 357–439 (DHPDNVKIIF…GLSQSQLLFV (83 aa)) form the UBX domain.

Its subcellular location is the cytoplasm. The protein localises to the lipid droplet. The protein resides in the endoplasmic reticulum. In terms of biological role, plays an important role in endoplasmic reticulum-associated degradation (ERAD) that mediates ubiquitin-dependent degradation of misfolded endoplasmic reticulum proteins. Involved in inhibition of lipid droplet degradation. Involved in stress granule disassembly. The chain is FAS-associated factor 2-A (faf2-a) from Xenopus laevis (African clawed frog).